The primary structure comprises 377 residues: DNA methyltransferase CcrM (377 aa).

The region spanning 271 to 373 (LGKAELTVMT…LRKIIREQMA (103 aa)) is the RAMA domain.

Belongs to the N(4)/N(6)-methyltransferase family.

It carries out the reaction a 2'-deoxyadenosine in DNA + S-adenosyl-L-methionine = an N(6)-methyl-2'-deoxyadenosine in DNA + S-adenosyl-L-homocysteine + H(+). In terms of biological role, a beta subtype methylase that recognizes the double-stranded sequence 5'-GANTC-3' and methylates on A-2 on both strands. Overexpression from a moderate-copy number plasmid (10-12 copies/cell) leads to enlarged, branched cells, many with 3-5 genome equivalents. Contributes to the accurate cell-cycle control of DNA replication and cellular morphology. This Brucella abortus (strain 2308) protein is DNA methyltransferase CcrM.